Consider the following 155-residue polypeptide: Small ribosomal subunit protein bS6 (155 aa).

A compositionally biased stretch (basic and acidic residues) spans 115-137; sequence EADAAKAEADAARVEAEAKKAET. The disordered stretch occupies residues 115–155; the sequence is EADAAKAEADAARVEAEAKKAETDETDETVDAETPENEEEN. Acidic residues predominate over residues 138–155; that stretch reads DETDETVDAETPENEEEN.

It belongs to the bacterial ribosomal protein bS6 family.

Its function is as follows. Binds together with bS18 to 16S ribosomal RNA. In Desulforapulum autotrophicum (strain ATCC 43914 / DSM 3382 / VKM B-1955 / HRM2) (Desulfobacterium autotrophicum), this protein is Small ribosomal subunit protein bS6.